The chain runs to 466 residues: Asparagine--tRNA ligase (466 aa).

The protein belongs to the class-II aminoacyl-tRNA synthetase family. As to quaternary structure, homodimer.

It is found in the cytoplasm. It catalyses the reaction tRNA(Asn) + L-asparagine + ATP = L-asparaginyl-tRNA(Asn) + AMP + diphosphate + H(+). The protein is Asparagine--tRNA ligase of Escherichia coli O157:H7.